Reading from the N-terminus, the 389-residue chain is Probable serine/threonine-protein kinase PBL24 (389 aa).

Residues M1–R36 form a disordered region. C3 carries S-palmitoyl cysteine lipidation. A Protein kinase domain is found at F71–M348. Residues I77–V85 and K100 contribute to the ATP site. Residue D198 is the Proton acceptor of the active site. Phosphoserine is present on residues S202 and S232. T238 is subject to Phosphothreonine. Y246 carries the phosphotyrosine modification.

It belongs to the protein kinase superfamily. Ser/Thr protein kinase family.

It is found in the cell membrane. It catalyses the reaction L-seryl-[protein] + ATP = O-phospho-L-seryl-[protein] + ADP + H(+). It carries out the reaction L-threonyl-[protein] + ATP = O-phospho-L-threonyl-[protein] + ADP + H(+). May be involved in plant defense signaling. In Arabidopsis thaliana (Mouse-ear cress), this protein is Probable serine/threonine-protein kinase PBL24.